The chain runs to 142 residues: Nucleoside diphosphate kinase (142 aa).

Positions 11, 59, 87, 93, 104, and 114 each coordinate ATP. His117 acts as the Pros-phosphohistidine intermediate in catalysis.

This sequence belongs to the NDK family. In terms of assembly, homotetramer. The cofactor is Mg(2+).

The protein resides in the cytoplasm. The catalysed reaction is a 2'-deoxyribonucleoside 5'-diphosphate + ATP = a 2'-deoxyribonucleoside 5'-triphosphate + ADP. It carries out the reaction a ribonucleoside 5'-diphosphate + ATP = a ribonucleoside 5'-triphosphate + ADP. Functionally, major role in the synthesis of nucleoside triphosphates other than ATP. The ATP gamma phosphate is transferred to the NDP beta phosphate via a ping-pong mechanism, using a phosphorylated active-site intermediate. This is Nucleoside diphosphate kinase from Wigglesworthia glossinidia brevipalpis.